The chain runs to 398 residues: Bifunctional enzyme IspD/IspF (398 aa).

The tract at residues 1 to 234 (MAKSQRTAVV…ARLAAQLGDI (234 aa)) is 2-C-methyl-D-erythritol 4-phosphate cytidylyltransferase. A 2-C-methyl-D-erythritol 2,4-cyclodiphosphate synthase region spans residues 235–398 (RTGTGYDVHA…LPFNEKTWSV (164 aa)). Asp-241 and His-243 together coordinate a divalent metal cation. Residues 241 to 243 (DVH) and 267 to 268 (HS) contribute to the 4-CDP-2-C-methyl-D-erythritol 2-phosphate site. Residue His-275 participates in a divalent metal cation binding. Residues 289 to 291 (DIG), 365 to 368 (TTSE), Phe-372, and Arg-375 each bind 4-CDP-2-C-methyl-D-erythritol 2-phosphate.

This sequence in the N-terminal section; belongs to the IspD/TarI cytidylyltransferase family. IspD subfamily. It in the C-terminal section; belongs to the IspF family. A divalent metal cation serves as cofactor.

It carries out the reaction 2-C-methyl-D-erythritol 4-phosphate + CTP + H(+) = 4-CDP-2-C-methyl-D-erythritol + diphosphate. The enzyme catalyses 4-CDP-2-C-methyl-D-erythritol 2-phosphate = 2-C-methyl-D-erythritol 2,4-cyclic diphosphate + CMP. It functions in the pathway isoprenoid biosynthesis; isopentenyl diphosphate biosynthesis via DXP pathway; isopentenyl diphosphate from 1-deoxy-D-xylulose 5-phosphate: step 2/6. It participates in isoprenoid biosynthesis; isopentenyl diphosphate biosynthesis via DXP pathway; isopentenyl diphosphate from 1-deoxy-D-xylulose 5-phosphate: step 4/6. Bifunctional enzyme that catalyzes the formation of 4-diphosphocytidyl-2-C-methyl-D-erythritol from CTP and 2-C-methyl-D-erythritol 4-phosphate (MEP) (IspD), and catalyzes the conversion of 4-diphosphocytidyl-2-C-methyl-D-erythritol 2-phosphate (CDP-ME2P) to 2-C-methyl-D-erythritol 2,4-cyclodiphosphate (ME-CPP) with a corresponding release of cytidine 5-monophosphate (CMP) (IspF). The polypeptide is Bifunctional enzyme IspD/IspF (Bradyrhizobium diazoefficiens (strain JCM 10833 / BCRC 13528 / IAM 13628 / NBRC 14792 / USDA 110)).